The following is a 404-amino-acid chain: Chorismate synthase (404 aa).

2 residues coordinate NADP(+): Arg40 and Arg46. Residues 135-137 (RAS), 256-257 (QA), Gly300, 315-319 (KPIST), and Arg341 each bind FMN.

The protein belongs to the chorismate synthase family. As to quaternary structure, homotetramer. The cofactor is FMNH2.

The enzyme catalyses 5-O-(1-carboxyvinyl)-3-phosphoshikimate = chorismate + phosphate. Its pathway is metabolic intermediate biosynthesis; chorismate biosynthesis; chorismate from D-erythrose 4-phosphate and phosphoenolpyruvate: step 7/7. Its function is as follows. Catalyzes the anti-1,4-elimination of the C-3 phosphate and the C-6 proR hydrogen from 5-enolpyruvylshikimate-3-phosphate (EPSP) to yield chorismate, which is the branch point compound that serves as the starting substrate for the three terminal pathways of aromatic amino acid biosynthesis. This reaction introduces a second double bond into the aromatic ring system. This chain is Chorismate synthase, found in Mycobacterium sp. (strain JLS).